The following is a 278-amino-acid chain: Large ribosomal subunit protein uL2 (278 aa).

Disordered regions lie at residues 32-57 and 221-278; these read ALTE…IGGG and RGVA…KKKR. A compositionally biased stretch (basic residues) spans 269 to 278; the sequence is IRSRHAKKKR.

Belongs to the universal ribosomal protein uL2 family. Part of the 50S ribosomal subunit. Forms a bridge to the 30S subunit in the 70S ribosome.

Functionally, one of the primary rRNA binding proteins. Required for association of the 30S and 50S subunits to form the 70S ribosome, for tRNA binding and peptide bond formation. It has been suggested to have peptidyltransferase activity; this is somewhat controversial. Makes several contacts with the 16S rRNA in the 70S ribosome. The chain is Large ribosomal subunit protein uL2 from Zymomonas mobilis subsp. mobilis (strain ATCC 31821 / ZM4 / CP4).